Reading from the N-terminus, the 77-residue chain is Small ribosomal subunit protein bS21 (77 aa).

Residues 55–77 (RKLARKRAQREGLMSNGRISALR) form a disordered region.

The protein belongs to the bacterial ribosomal protein bS21 family.

The polypeptide is Small ribosomal subunit protein bS21 (Bartonella quintana (strain Toulouse) (Rochalimaea quintana)).